We begin with the raw amino-acid sequence, 404 residues long: Cytochrome P450 monooxygenase avaI (404 aa).

Heme is bound at residue Cys-382.

Belongs to the cytochrome P450 family. Heme is required as a cofactor.

It functions in the pathway secondary metabolite biosynthesis. Functionally, cytochrome P450 monooxygenase; part of the cluster that mediates the biosynthesis of a highly modified cyclo-arginine-tryptophan dipeptide (cRW). The first step of the pathway is perfornmed by the arginine-containing cyclodipeptide synthase (RCPDS) avaA that acts as the scaffold-generating enzyme and is responsible for formation of the cyclo-Arg-Trp (cRW) diketopiperazine. AvaB then acts as a multifunctional flavoenzyme that is responsible for generating the cyclo-Arg-formylkynurenine DKP, which can be deformylated by avaC. AvaB then further catalyzes an additional N-oxidation followed by cyclization and dehydration. The next step is an N-acetylation of the guanidine group catalyzed by the arginine N-acetyltransferase avaD. The roles of the additional enzymes identified within the ava cluster still have to be determined. In Aspergillus versicolor, this protein is Cytochrome P450 monooxygenase avaI.